The chain runs to 596 residues: Nitrite reductase (596 aa).

Positions 1–29 (MRQRTPFARPGLLASAALALVLGPLAASA) are cleaved as a signal peptide. The tract at residues 30 to 76 (QEQVAPPKDPAAALEDHKTRTDNRYEPSLDNLAQQDVAAPGAPEGVS) is N-terminal tail. His46 is a heme c binding site. Heme d1-binding residues include Tyr54 and Ser57. The Cytochrome c domain occupies 77-162 (ALSDAQYNEA…ANYLLLDPAA (86 aa)). Positions 94, 97, 98, 108, and 122 each coordinate heme c. The heme d1 site is built by Trp138, Arg203, His229, Arg232, Arg245, Arg272, Tyr292, Arg420, Gln536, and Thr583. Positions 163 to 596 (PPEFGMKEMR…NVYNTMTDTY (434 aa)) are D1-heme domain.

As to quaternary structure, homodimer. Heme c is required as a cofactor. It depends on heme as a cofactor.

Its subcellular location is the periplasm. It carries out the reaction nitric oxide + Fe(III)-[cytochrome c] + H2O = Fe(II)-[cytochrome c] + nitrite + 2 H(+). The catalysed reaction is A + NH4(+) + H2O = hydroxylamine + AH2 + H(+). The chain is Nitrite reductase (nirS) from Paracoccus pantotrophus (Thiosphaera pantotropha).